The following is a 1226-amino-acid chain: Methionine synthase (1226 aa).

Residues 6–326 (RQQLEQQLKQ…EHIAAIAKAV (321 aa)) enclose the Hcy-binding domain. Residues cysteine 248, cysteine 311, and cysteine 312 each contribute to the Zn(2+) site. The Pterin-binding domain occupies 357–618 (FVNVGERTNV…VPLKLREAVE (262 aa)). Residues 651–745 (SALEWRAWPV…FINAQKSGST (95 aa)) form the B12-binding N-terminal domain. Methylcob(III)alamin is bound by residues glutamate 695, 757–761 (GDVHD), histidine 760, serine 805, threonine 809, and alanine 861. The 136-residue stretch at 747–882 (NGKILLATVK…SDEQRPGFIE (136 aa)) folds into the B12-binding domain. The 329-residue stretch at 898–1226 (KTPKSRPVTL…EKWLAPNLDA (329 aa)) folds into the AdoMet activation domain. Residues aspartate 948, arginine 1136, and 1191–1192 (YF) contribute to the S-adenosyl-L-methionine site.

This sequence belongs to the vitamin-B12 dependent methionine synthase family. Methylcob(III)alamin serves as cofactor. Zn(2+) is required as a cofactor.

The catalysed reaction is (6S)-5-methyl-5,6,7,8-tetrahydrofolate + L-homocysteine = (6S)-5,6,7,8-tetrahydrofolate + L-methionine. It participates in amino-acid biosynthesis; L-methionine biosynthesis via de novo pathway; L-methionine from L-homocysteine (MetH route): step 1/1. Its function is as follows. Catalyzes the transfer of a methyl group from methyl-cobalamin to homocysteine, yielding enzyme-bound cob(I)alamin and methionine. Subsequently, remethylates the cofactor using methyltetrahydrofolate. The chain is Methionine synthase (metH) from Vibrio cholerae serotype O1 (strain ATCC 39315 / El Tor Inaba N16961).